Consider the following 508-residue polypeptide: Photosystem II CP47 reaction center protein (508 aa).

Helical transmembrane passes span 21 to 36 (SVHIMHTALVSGWAGS), 101 to 115 (IVFSGLCFLAAIWHW), 140 to 156 (GIHLFLSGVACFGFGAF), 203 to 218 (IAAGTLGILAGLFHLS), 237 to 252 (VLSSSIAAVFFAAFVV), and 457 to 472 (SFALLFFFGHIWHGAR).

Belongs to the PsbB/PsbC family. PsbB subfamily. As to quaternary structure, PSII is composed of 1 copy each of membrane proteins PsbA, PsbB, PsbC, PsbD, PsbE, PsbF, PsbH, PsbI, PsbJ, PsbK, PsbL, PsbM, PsbT, PsbX, PsbY, PsbZ, Psb30/Ycf12, at least 3 peripheral proteins of the oxygen-evolving complex and a large number of cofactors. It forms dimeric complexes. Requires Binds multiple chlorophylls. PSII binds additional chlorophylls, carotenoids and specific lipids. as cofactor.

The protein localises to the plastid. It is found in the chloroplast thylakoid membrane. In terms of biological role, one of the components of the core complex of photosystem II (PSII). It binds chlorophyll and helps catalyze the primary light-induced photochemical processes of PSII. PSII is a light-driven water:plastoquinone oxidoreductase, using light energy to abstract electrons from H(2)O, generating O(2) and a proton gradient subsequently used for ATP formation. This chain is Photosystem II CP47 reaction center protein, found in Illicium oligandrum (Star anise).